The sequence spans 193 residues: MEPFRIHKGTAAVLMNDNIDTDQIIPKQYLKRIERTGFGKFLFDEWRYDNERHENPNFPLNAPDRKGASILITGNNFGCGSSREHAPWALADYGFRVIIAGGFADIFYMNCMKNGMLPIVMDKEMREKLVKTDAREQIEVDLENEVITTSTHRFHFTIEKMWKEKLLNGLDEISITMQYEQEIKEYERRIAAY.

This sequence belongs to the LeuD family. LeuD type 1 subfamily. Heterodimer of LeuC and LeuD.

The enzyme catalyses (2R,3S)-3-isopropylmalate = (2S)-2-isopropylmalate. It participates in amino-acid biosynthesis; L-leucine biosynthesis; L-leucine from 3-methyl-2-oxobutanoate: step 2/4. Functionally, catalyzes the isomerization between 2-isopropylmalate and 3-isopropylmalate, via the formation of 2-isopropylmaleate. The protein is 3-isopropylmalate dehydratase small subunit of Bacillus anthracis (strain CDC 684 / NRRL 3495).